The primary structure comprises 464 residues: Trigger factor (464 aa).

The 82-residue stretch at 162–243 (GDFISIDLSA…VGTVKERELP (82 aa)) folds into the PPIase FKBP-type domain. The interval 435–464 (ELFGNGEAETEEAASTDEAASDSTESEDQK) is disordered.

Belongs to the FKBP-type PPIase family. Tig subfamily.

The protein resides in the cytoplasm. The enzyme catalyses [protein]-peptidylproline (omega=180) = [protein]-peptidylproline (omega=0). Its function is as follows. Involved in protein export. Acts as a chaperone by maintaining the newly synthesized protein in an open conformation. Functions as a peptidyl-prolyl cis-trans isomerase. The sequence is that of Trigger factor from Rhodococcus jostii (strain RHA1).